The following is a 475-amino-acid chain: Ribulose bisphosphate carboxylase large chain (475 aa).

The propeptide occupies 1–2 (MS). At Pro3 the chain carries N-acetylproline. The residue at position 14 (Lys14) is an N6,N6,N6-trimethyllysine. The substrate site is built by Asn123 and Thr173. Lys175 serves as the catalytic Proton acceptor. Lys177 is a substrate binding site. The Mg(2+) site is built by Lys201, Asp203, and Glu204. Lys201 is modified (N6-carboxylysine). The active-site Proton acceptor is His294. Arg295, His327, and Ser379 together coordinate substrate.

This sequence belongs to the RuBisCO large chain family. Type I subfamily. As to quaternary structure, heterohexadecamer of 8 large chains and 8 small chains; disulfide-linked. The disulfide link is formed within the large subunit homodimers. It depends on Mg(2+) as a cofactor. The disulfide bond which can form in the large chain dimeric partners within the hexadecamer appears to be associated with oxidative stress and protein turnover.

The protein localises to the plastid. The protein resides in the chloroplast. The enzyme catalyses 2 (2R)-3-phosphoglycerate + 2 H(+) = D-ribulose 1,5-bisphosphate + CO2 + H2O. It carries out the reaction D-ribulose 1,5-bisphosphate + O2 = 2-phosphoglycolate + (2R)-3-phosphoglycerate + 2 H(+). Its function is as follows. RuBisCO catalyzes two reactions: the carboxylation of D-ribulose 1,5-bisphosphate, the primary event in carbon dioxide fixation, as well as the oxidative fragmentation of the pentose substrate in the photorespiration process. Both reactions occur simultaneously and in competition at the same active site. This Nandina domestica (Heavenly bamboo) protein is Ribulose bisphosphate carboxylase large chain.